A 368-amino-acid chain; its full sequence is 3-dehydroquinate synthase (368 aa).

Residues 71 to 76 (DGESFK), 105 to 109 (GVIGD), 129 to 130 (TT), Lys-142, Lys-151, and 169 to 172 (TLRT) each bind NAD(+). Residues Glu-184, His-247, and His-264 each contribute to the Zn(2+) site.

The protein belongs to the sugar phosphate cyclases superfamily. Dehydroquinate synthase family. It depends on NAD(+) as a cofactor. Co(2+) serves as cofactor. Zn(2+) is required as a cofactor.

The protein localises to the cytoplasm. It carries out the reaction 7-phospho-2-dehydro-3-deoxy-D-arabino-heptonate = 3-dehydroquinate + phosphate. It functions in the pathway metabolic intermediate biosynthesis; chorismate biosynthesis; chorismate from D-erythrose 4-phosphate and phosphoenolpyruvate: step 2/7. In terms of biological role, catalyzes the conversion of 3-deoxy-D-arabino-heptulosonate 7-phosphate (DAHP) to dehydroquinate (DHQ). This chain is 3-dehydroquinate synthase, found in Ralstonia nicotianae (strain ATCC BAA-1114 / GMI1000) (Ralstonia solanacearum).